The following is a 253-amino-acid chain: Zinc import ATP-binding protein ZnuC (253 aa).

Residues 6-227 enclose the ABC transporter domain; sequence VTLNKISVTF…FGNRGAEQLA (222 aa). 38–45 provides a ligand contact to ATP; sequence GPNGAGKS.

It belongs to the ABC transporter superfamily. Zinc importer (TC 3.A.1.15.5) family. In terms of assembly, the complex is composed of two ATP-binding proteins (ZnuC), two transmembrane proteins (ZnuB) and a solute-binding protein (ZnuA).

It is found in the cell inner membrane. The catalysed reaction is Zn(2+)(out) + ATP(in) + H2O(in) = Zn(2+)(in) + ADP(in) + phosphate(in) + H(+)(in). In terms of biological role, part of the ABC transporter complex ZnuABC involved in zinc import. Responsible for energy coupling to the transport system. The chain is Zinc import ATP-binding protein ZnuC from Yersinia pseudotuberculosis serotype I (strain IP32953).